A 130-amino-acid chain; its full sequence is Small ribosomal subunit protein uS9 (130 aa).

Belongs to the universal ribosomal protein uS9 family.

The polypeptide is Small ribosomal subunit protein uS9 (Enterococcus faecalis (strain ATCC 700802 / V583)).